A 277-amino-acid polypeptide reads, in one-letter code: 2-dehydro-3-deoxyphosphooctonate aldolase (277 aa).

The protein belongs to the KdsA family.

It localises to the cytoplasm. The catalysed reaction is D-arabinose 5-phosphate + phosphoenolpyruvate + H2O = 3-deoxy-alpha-D-manno-2-octulosonate-8-phosphate + phosphate. The protein operates within carbohydrate biosynthesis; 3-deoxy-D-manno-octulosonate biosynthesis; 3-deoxy-D-manno-octulosonate from D-ribulose 5-phosphate: step 2/3. It participates in bacterial outer membrane biogenesis; lipopolysaccharide biosynthesis. The protein is 2-dehydro-3-deoxyphosphooctonate aldolase of Dichelobacter nodosus (strain VCS1703A).